We begin with the raw amino-acid sequence, 257 residues long: UPF0246 protein Shewmr4_2963 (257 aa).

The protein belongs to the UPF0246 family.

In Shewanella sp. (strain MR-4), this protein is UPF0246 protein Shewmr4_2963.